A 145-amino-acid chain; its full sequence is MAKKVVGTIELMIPAQQASPSPPVGPALGQHGVNIMEFVKSFNAATAEMKPGTVVPVVITVYADRSFTFILKTPPASYLLKEAAGIKKGASDPKREKVGKVTKEQIREIAEIKMKDLNTEDIEAAMRIIAGTARSMGIEVEGLEA.

It belongs to the universal ribosomal protein uL11 family. In terms of assembly, part of the ribosomal stalk of the 50S ribosomal subunit. Interacts with L10 and the large rRNA to form the base of the stalk. L10 forms an elongated spine to which L12 dimers bind in a sequential fashion forming a multimeric L10(L12)X complex. One or more lysine residues are methylated.

Functionally, forms part of the ribosomal stalk which helps the ribosome interact with GTP-bound translation factors. The polypeptide is Large ribosomal subunit protein uL11 (Persephonella marina (strain DSM 14350 / EX-H1)).